A 269-amino-acid chain; its full sequence is 4-hydroxy-tetrahydrodipicolinate reductase (269 aa).

NAD(+) contacts are provided by residues 8–13 (GAAGRM), Glu34, 98–100 (GTT), and 122–125 (APNY). The active-site Proton donor/acceptor is the His155. His156 contributes to the (S)-2,3,4,5-tetrahydrodipicolinate binding site. Catalysis depends on Lys159, which acts as the Proton donor. 165–166 (GT) contributes to the (S)-2,3,4,5-tetrahydrodipicolinate binding site.

It belongs to the DapB family.

It is found in the cytoplasm. It catalyses the reaction (S)-2,3,4,5-tetrahydrodipicolinate + NAD(+) + H2O = (2S,4S)-4-hydroxy-2,3,4,5-tetrahydrodipicolinate + NADH + H(+). The enzyme catalyses (S)-2,3,4,5-tetrahydrodipicolinate + NADP(+) + H2O = (2S,4S)-4-hydroxy-2,3,4,5-tetrahydrodipicolinate + NADPH + H(+). It participates in amino-acid biosynthesis; L-lysine biosynthesis via DAP pathway; (S)-tetrahydrodipicolinate from L-aspartate: step 4/4. Its function is as follows. Catalyzes the conversion of 4-hydroxy-tetrahydrodipicolinate (HTPA) to tetrahydrodipicolinate. In Aliivibrio salmonicida (strain LFI1238) (Vibrio salmonicida (strain LFI1238)), this protein is 4-hydroxy-tetrahydrodipicolinate reductase.